Reading from the N-terminus, the 293-residue chain is 5'-3' exoribonuclease Rnm (293 aa).

Mn(2+) is bound by residues His-13, His-15, Asp-20, His-45, Glu-72, His-83, His-198, Asp-255, and His-257.

Belongs to the PHP family. TrpH/YciV subfamily. Requires Mn(2+) as cofactor.

The enzyme catalyses a ribonucleoside 3',5'-bisphosphate + H2O = a ribonucleoside 5'-phosphate + phosphate. Functionally, exoribonuclease that catalyzes the last steps of 5S, 16S and 23S rRNA 5'-end maturation. Removes 3 nucleotides (nt) from the 5' end of 5S, 16S and 23S rRNA precursors to generate the mature 5' ends. Precursors with longer extensions are not processed (7 nt at the 5' end of pre-23S rRNA or 66 nt at the 5'-end of 16S rRNA are not processed). 5S and 23S rRNA maturation occurs more efficiently and accurately on ribosomal particles as compared to free RNA; the enzyme overdigests free RNA but generates the correct 5'-end in ribosomes from rnm deletion strains. Efficiently catalyzes the hydrolysis of the 3'-phosphate from 3',5'-bis-phosphonucleotides as well as the successive hydrolysis of 5'-phosphomononucleotides from the 5'-end of short pieces of RNA and DNA, with no specificity toward the identity of the nucleotide base. Is more efficient at hydrolyzing RNA oligonucleotides than DNA oligonucleotides. This enzyme can also hydrolyze annealed DNA duplexes, albeit at a catalytic efficiency approximately 10-fold lower than that of the corresponding single-stranded oligonucleotides. The chain is 5'-3' exoribonuclease Rnm from Escherichia coli (strain K12).